The following is a 588-amino-acid chain: Aspartate--tRNA ligase (588 aa).

Residue Glu177 coordinates L-aspartate. Residues 201–204 (QLFK) are aspartate. L-aspartate is bound at residue Arg223. ATP is bound by residues 223-225 (RDE) and Gln232. An L-aspartate-binding site is contributed by His451. Glu485 contributes to the ATP binding site. Position 492 (Arg492) interacts with L-aspartate. An ATP-binding site is contributed by 537–540 (GLDR).

Belongs to the class-II aminoacyl-tRNA synthetase family. Type 1 subfamily. Homodimer.

Its subcellular location is the cytoplasm. It carries out the reaction tRNA(Asp) + L-aspartate + ATP = L-aspartyl-tRNA(Asp) + AMP + diphosphate. Its function is as follows. Catalyzes the attachment of L-aspartate to tRNA(Asp) in a two-step reaction: L-aspartate is first activated by ATP to form Asp-AMP and then transferred to the acceptor end of tRNA(Asp). This Staphylococcus epidermidis (strain ATCC 35984 / DSM 28319 / BCRC 17069 / CCUG 31568 / BM 3577 / RP62A) protein is Aspartate--tRNA ligase.